We begin with the raw amino-acid sequence, 373 residues long: Enoyl-[acyl-carrier-protein] reductase, mitochondrial (373 aa).

The N-terminal 53 residues, Met1–Asp53, are a transit peptide targeting the mitochondrion. Lys61 bears the N6-acetyllysine; alternate mark. Lys61 bears the N6-succinyllysine; alternate mark. The Proton donor role is filled by Tyr94. Residues Asn167, Asn193–Val196, and Arg216–Arg218 each bind NADP(+). N6-acetyllysine; alternate occurs at positions 252 and 267. 2 positions are modified to N6-succinyllysine; alternate: Lys252 and Lys267. Residues Tyr285–Met288 and Phe310–Leu312 each bind NADP(+). The residue at position 316 (Lys316) is an N6-succinyllysine. Lys368 contacts NADP(+).

This sequence belongs to the zinc-containing alcohol dehydrogenase family. Quinone oxidoreductase subfamily. As to quaternary structure, homodimer. Interacts with PPARA in the nucleus and increases its activity.

Its subcellular location is the mitochondrion. It is found in the cytoplasm. The protein localises to the nucleus. It catalyses the reaction a 2,3-saturated acyl-[ACP] + NADP(+) = a (2E)-enoyl-[ACP] + NADPH + H(+). The catalysed reaction is (2E)-butenoyl-[ACP] + NADPH + H(+) = butanoyl-[ACP] + NADP(+). It carries out the reaction (2E)-hexenoyl-[ACP] + NADPH + H(+) = hexanoyl-[ACP] + NADP(+). The enzyme catalyses (2E)-octenoyl-[ACP] + NADPH + H(+) = octanoyl-[ACP] + NADP(+). It catalyses the reaction (2E)-decenoyl-[ACP] + NADPH + H(+) = decanoyl-[ACP] + NADP(+). The catalysed reaction is (2E)-dodecenoyl-[ACP] + NADPH + H(+) = dodecanoyl-[ACP] + NADP(+). It carries out the reaction (2E)-tetradecenoyl-[ACP] + NADPH + H(+) = tetradecanoyl-[ACP] + NADP(+). The enzyme catalyses (2E)-hexadecenoyl-[ACP] + NADPH + H(+) = hexadecanoyl-[ACP] + NADP(+). In terms of biological role, catalyzes the NADPH-dependent reduction of trans-2-enoyl thioesters in mitochondrial fatty acid synthesis (fatty acid synthesis type II). Fatty acid chain elongation in mitochondria uses acyl carrier protein (ACP) as an acyl group carrier, but the enzyme accepts both ACP and CoA thioesters as substrates in vitro. Displays a preference for medium-chain over short- and long-chain substrates. May provide the octanoyl chain used for lipoic acid biosynthesis, regulating protein lipoylation and mitochondrial respiratory activity particularly in Purkinje cells. Involved in iron homeostasis; affecting Fe-S cluster assembly and ceramide metabolism. Required for proper morphology and bioenergetic functions of mitochondria. Required for maintenance of neurons. The polypeptide is Enoyl-[acyl-carrier-protein] reductase, mitochondrial (Mecr) (Rattus norvegicus (Rat)).